The sequence spans 211 residues: Bifunctional transcriptional activator/DNA repair enzyme AdaA (211 aa).

Residue cysteine 54 is the Nucleophile; methyl group acceptor from methylphosphotriester of the active site. Residues cysteine 54, cysteine 58, cysteine 85, and cysteine 88 each contribute to the Zn(2+) site. Residues 102 to 200 (DLITEYIDKN…GQTPARFRQM (99 aa)) form the HTH araC/xylS-type domain. Positions 119-140 (ESLADICHGSPYHMHRTFKKIK) form a DNA-binding region, H-T-H motif.

The cofactor is Zn(2+).

It catalyses the reaction (2'-deoxyribonucleoside 5'-methylphosphotriester)-DNA + L-cysteinyl-[protein] = 2'-deoxyribonucleotide-DNA + S-methyl-L-cysteinyl-[protein] + H(+). Functionally, is involved in the adaptive response to alkylation damage in DNA caused by alkylating agents. Repairs the methylphosphotriester lesions in DNA by a direct and irreversible transfer of the methyl group to one of its own cysteine residues. Its function is as follows. The methylation of AdaA by methylphosphotriesters in DNA leads to its activation as a transcriptional regulator that activates the transcription of the ada operon which consists of adaA and adaB, and of the adjacent gene alkA. This is Bifunctional transcriptional activator/DNA repair enzyme AdaA (adaA) from Bacillus subtilis (strain 168).